Here is a 181-residue protein sequence, read N- to C-terminus: ATP-dependent protease subunit HslV (181 aa).

Residue Thr7 is part of the active site. Na(+) is bound by residues Ala166, Cys169, and Thr172.

Belongs to the peptidase T1B family. HslV subfamily. As to quaternary structure, a double ring-shaped homohexamer of HslV is capped on each side by a ring-shaped HslU homohexamer. The assembly of the HslU/HslV complex is dependent on binding of ATP.

The protein resides in the cytoplasm. The enzyme catalyses ATP-dependent cleavage of peptide bonds with broad specificity.. Its activity is regulated as follows. Allosterically activated by HslU binding. In terms of biological role, protease subunit of a proteasome-like degradation complex believed to be a general protein degrading machinery. The protein is ATP-dependent protease subunit HslV of Anaeromyxobacter dehalogenans (strain 2CP-1 / ATCC BAA-258).